A 575-amino-acid chain; its full sequence is 4-substituted benzoates-glutamate ligase GH3.12 (575 aa).

Positions 6–33 form a coiled coil; sequence DINETFEKQLKDLTSNVKSIQDNLLEEI. An AMP-binding site is contributed by 95–96; that stretch reads SS. Residue 120 to 123 coordinates salicylate; that stretch reads YDLR. AMP is bound by residues Thr-301, Thr-324, Ser-328, Tyr-347, Asp-398, and Arg-417.

This sequence belongs to the IAA-amido conjugating enzyme family. In terms of assembly, interacts with the P.syringae pv. maculicola effector HopW1-1 (via C-terminus). In terms of tissue distribution, expressed in seedlings, mostly in cotyledons, leaves, hypocotyls and sporadically in roots. Not detected in unchallenged adult plants, except in flowers.

Specifically and reversibly inhibited by salicylic acid (SA). Functionally, catalyzes the conjugation of specific amino acids (e.g. Glu and possibly His, Lys, and Met) to their preferred acyl substrates (e.g. 4-substituted benzoates), in a magnesium ion- and ATP-dependent manner. Can use 4-substituted benzoates such as 4-aminobenzoate (pABA), 4-fluorobenzoate and 4-hydroxybenzoate (4-HBA), and, to a lesser extent, benzoate, vanillate and trans-cinnamate, but not 2-substituted benzoates and salicylic acid (SA), as conjugating acyl substrates. Involved in both basal and induced resistance in a SA-dependent manner. Confers resistance to virulent and avirulent pathogens (at least bacteria and oomycetes), and promotes SA glucosides accumulation. Required for the establishment of hyper-sensitive response (HR) upon incompatible interaction and subsequent systemic acquired resistance (SAR). This Arabidopsis thaliana (Mouse-ear cress) protein is 4-substituted benzoates-glutamate ligase GH3.12 (GH3.12).